We begin with the raw amino-acid sequence, 708 residues long: Polyribonucleotide nucleotidyltransferase (708 aa).

Positions 490 and 496 each coordinate Mg(2+). The KH domain occupies 557-619; it reads PRIETMTIPK…KSIDDAIRLI (63 aa). The 71-residue stretch at 629 to 699 folds into the S1 motif domain; the sequence is GEVYKGKVRS…KTGKFKLSRK (71 aa).

This sequence belongs to the polyribonucleotide nucleotidyltransferase family. Mg(2+) serves as cofactor.

Its subcellular location is the cytoplasm. The enzyme catalyses RNA(n+1) + phosphate = RNA(n) + a ribonucleoside 5'-diphosphate. Functionally, involved in mRNA degradation. Catalyzes the phosphorolysis of single-stranded polyribonucleotides processively in the 3'- to 5'-direction. The polypeptide is Polyribonucleotide nucleotidyltransferase (Bacteroides fragilis (strain ATCC 25285 / DSM 2151 / CCUG 4856 / JCM 11019 / LMG 10263 / NCTC 9343 / Onslow / VPI 2553 / EN-2)).